We begin with the raw amino-acid sequence, 334 residues long: Biotin synthase (334 aa).

Positions 48–275 (NQVQTSQLLS…RSMVRLSAGR (228 aa)) constitute a Radical SAM core domain. Positions 63, 67, and 70 each coordinate [4Fe-4S] cluster. 4 residues coordinate [2Fe-2S] cluster: C107, C138, C198, and R270.

It belongs to the radical SAM superfamily. Biotin synthase family. As to quaternary structure, homodimer. Requires [4Fe-4S] cluster as cofactor. [2Fe-2S] cluster is required as a cofactor.

It carries out the reaction (4R,5S)-dethiobiotin + (sulfur carrier)-SH + 2 reduced [2Fe-2S]-[ferredoxin] + 2 S-adenosyl-L-methionine = (sulfur carrier)-H + biotin + 2 5'-deoxyadenosine + 2 L-methionine + 2 oxidized [2Fe-2S]-[ferredoxin]. It functions in the pathway cofactor biosynthesis; biotin biosynthesis; biotin from 7,8-diaminononanoate: step 2/2. Functionally, catalyzes the conversion of dethiobiotin (DTB) to biotin by the insertion of a sulfur atom into dethiobiotin via a radical-based mechanism. The sequence is that of Biotin synthase from Maricaulis maris (strain MCS10) (Caulobacter maris).